The sequence spans 182 residues: Mitochondrial FAD-linked sulfhydryl oxidase erv1 (182 aa).

Residues 75–177 (RLPDVAELGR…FNCQVWSKKA (103 aa)) form the ERV/ALR sulfhydryl oxidase domain. Residues 81-87 (ELGRSTW), His-91, and Tyr-120 each bind FAD. 2 disulfide bridges follow: Cys-122–Cys-125 and Cys-153–Cys-170. FAD-binding positions include 153 to 165 (CEAH…RLGK) and 176 to 177 (KA).

FAD is required as a cofactor.

The protein resides in the mitochondrion intermembrane space. The enzyme catalyses 2 R'C(R)SH + O2 = R'C(R)S-S(R)CR' + H2O2. In terms of biological role, FAD-dependent sulfhydryl oxidase that catalyzes disulfide bond formation. Required for the import and folding of small cysteine-containing proteins in the mitochondrial intermembrane space (IMS). The chain is Mitochondrial FAD-linked sulfhydryl oxidase erv1 (erv1) from Schizosaccharomyces pombe (strain 972 / ATCC 24843) (Fission yeast).